The following is a 181-amino-acid chain: ATP synthase subunit b, chloroplastic (181 aa).

The chain crosses the membrane as a helical span at residues 31-50 (NVLNIAILLSGVVYLGRNFL).

The protein belongs to the ATPase B chain family. In terms of assembly, F-type ATPases have 2 components, F(1) - the catalytic core - and F(0) - the membrane proton channel. F(1) has five subunits: alpha(3), beta(3), gamma(1), delta(1), epsilon(1). F(0) has four main subunits: a(1), b(1), b'(1) and c(10-14). The alpha and beta chains form an alternating ring which encloses part of the gamma chain. F(1) is attached to F(0) by a central stalk formed by the gamma and epsilon chains, while a peripheral stalk is formed by the delta, b and b' chains.

The protein resides in the plastid. It is found in the chloroplast thylakoid membrane. In terms of biological role, f(1)F(0) ATP synthase produces ATP from ADP in the presence of a proton or sodium gradient. F-type ATPases consist of two structural domains, F(1) containing the extramembraneous catalytic core and F(0) containing the membrane proton channel, linked together by a central stalk and a peripheral stalk. During catalysis, ATP synthesis in the catalytic domain of F(1) is coupled via a rotary mechanism of the central stalk subunits to proton translocation. Its function is as follows. Component of the F(0) channel, it forms part of the peripheral stalk, linking F(1) to F(0). The polypeptide is ATP synthase subunit b, chloroplastic (Rhodomonas salina (Cryptomonas salina)).